We begin with the raw amino-acid sequence, 205 residues long: Small ribosomal subunit protein uS3c (205 aa).

Residues 37 to 106 (IRQLLRDYVL…TWRISLVEVS (70 aa)) enclose the KH type-2 domain.

Belongs to the universal ribosomal protein uS3 family. In terms of assembly, part of the 30S ribosomal subunit.

The protein localises to the plastid. It localises to the chloroplast. The chain is Small ribosomal subunit protein uS3c (rps3) from Cyanidioschyzon merolae (strain NIES-3377 / 10D) (Unicellular red alga).